A 458-amino-acid polypeptide reads, in one-letter code: MLKIFNTLTREKEEFKPINPNKVGMYVCGVTVYDLCHFGHGRTFVSFDVITRYLRYLGYDLRYVRNITDVDDKIIKRALENNETCDQLVERMIAEMHKDFDALNILRPDVEPRATKHIPEIIAMVETLIRRGHAYVAEDGDVMFDVESFQKYGALSRQNLEQLQAGARVEIKSVKKNPMDFVLWKMSKPNEPSWDSPWGKGRPGWHIECSAMNDKELGNHFDIHGGGSDLMFPHHENEIAQSCCAHDGEYVNYWLHTGMLTINEEKMSKSLNNFFTIRDILTKYDAESVRYFFLTAQYRSLLDYSEENIGLARKALERLYTALRGCETVEIPAEDQYVIDFKTAMDDDFNTPGALAVLFELAREINKLKTEDQTKANQLASRLKQLAGVLGLLEQAPETFLQGDAADAEVSKIEALIKRRNEARAAKDWAAADAARNELTAMGVVLEDGAKGTTWRKL.

A Zn(2+)-binding site is contributed by Cys-28. The 'HIGH' region signature appears at 30-40 (VTVYDLCHFGH). Zn(2+) contacts are provided by Cys-209, His-234, and Glu-238. Positions 266–270 (KMSKS) match the 'KMSKS' region motif. Lys-269 lines the ATP pocket.

This sequence belongs to the class-I aminoacyl-tRNA synthetase family. As to quaternary structure, monomer. It depends on Zn(2+) as a cofactor.

It localises to the cytoplasm. It catalyses the reaction tRNA(Cys) + L-cysteine + ATP = L-cysteinyl-tRNA(Cys) + AMP + diphosphate. This chain is Cysteine--tRNA ligase, found in Mannheimia succiniciproducens (strain KCTC 0769BP / MBEL55E).